We begin with the raw amino-acid sequence, 475 residues long: Equilibrative nucleoside transporter 3 (475 aa).

Over 1–51 the chain is Cytoplasmic; sequence MAFASEDNVYHSSNAVYRAPSNHQEADQEALLGKLLDYPAPGLQRPEDRFN. Ser-21 carries the post-translational modification Phosphoserine. The Dileucine internalization motif signature appears at 31 to 32; sequence LL. The helical transmembrane segment at 52–72 threads the bilayer; sequence GAYIIFFCLGIGGLLPWNFFV. The Extracellular portion of the chain corresponds to 73–105; sequence TAKEYWAYKLRNCSSPASGEDPEDMDILNYFES. Asn-84 carries N-linked (GlcNAc...) asparagine glycosylation. The chain crosses the membrane as a helical span at residues 106-126; the sequence is YLAVASTVPSLLFLVANFLLV. The Cytoplasmic segment spans residues 127–134; it reads NRVQVHVR. A helical transmembrane segment spans residues 135 to 155; that stretch reads VLASLSVSLAIFVVMIVLVKV. The Extracellular portion of the chain corresponds to 156–162; it reads DTSSWTR. A helical membrane pass occupies residues 163 to 183; that stretch reads GFFSLTIACMAIISSSSTIFN. The Cytoplasmic portion of the chain corresponds to 184-199; it reads SSVYGLTGSFPMRNAQ. Residues 200–220 form a helical membrane-spanning segment; sequence ALISGGAMGGTVSAVALLVDL. Residues 221–230 are Extracellular-facing; that stretch reads AASSDVRDST. Residues 231–251 traverse the membrane as a helical segment; the sequence is LAFFLMAAVFLGLCMGLYLLL. Over 252–305 the chain is Cytoplasmic; the sequence is SQLEYARYYMRPVAPVRVFSGEDNPSQDAPSASSVAPASRVMHTPPLGPILKKT. A helical membrane pass occupies residues 306 to 326; that stretch reads ASLGFCAVSLYFVTAFIIPAI. Over 327 to 340 the chain is Extracellular; sequence STNIQSMHKGTGSP. The chain crosses the membrane as a helical span at residues 341–361; it reads WTSKFFVPLTVFLLFNFADLC. Over 362–377 the chain is Cytoplasmic; sequence GRQVTAWIQVPGPRSK. Residues 378 to 398 form a helical membrane-spanning segment; it reads LLPGLVVSRFCLVPLFLLCNY. The Extracellular portion of the chain corresponds to 399–415; sequence QPRSHLTKVLFQSDIYP. Residues 416 to 436 traverse the membrane as a helical segment; that stretch reads VLFTCLLGLSNGYLSTLVLIY. Residues 437-450 lie on the Cytoplasmic side of the membrane; the sequence is GPKIVPRELAEATS. The helical transmembrane segment at 451 to 471 threads the bilayer; it reads VVMLFYMSVGLMLGSACAALL. Residues 472–475 are Extracellular-facing; that stretch reads EHFI.

It belongs to the SLC29A/ENT transporter (TC 2.A.57) family. In terms of tissue distribution, expressed in macrophages.

The protein resides in the lysosome membrane. The protein localises to the late endosome membrane. Its subcellular location is the mitochondrion membrane. It localises to the cell membrane. The catalysed reaction is adenosine(in) = adenosine(out). It catalyses the reaction guanosine(in) = guanosine(out). It carries out the reaction inosine(in) = inosine(out). The enzyme catalyses uridine(out) = uridine(in). The catalysed reaction is cytidine(in) = cytidine(out). It catalyses the reaction thymidine(in) = thymidine(out). It carries out the reaction 2'-deoxyadenosine(in) = 2'-deoxyadenosine(out). The enzyme catalyses 2'-deoxycytidine(in) = 2'-deoxycytidine(out). The catalysed reaction is guanine(out) = guanine(in). It catalyses the reaction uracil(in) = uracil(out). It carries out the reaction (R)-noradrenaline(out) = (R)-noradrenaline(in). The enzyme catalyses dopamine(out) = dopamine(in). The catalysed reaction is serotonin(out) = serotonin(in). It catalyses the reaction tyramine(in) = tyramine(out). It carries out the reaction ATP(in) = ATP(out). Uniporter that mediates the facilitative transport of nucleoside across lysosomal and mitochondrial membranes. Functions as a non-electrogenic Na(+)-independent transporter. Substrate transport is pH-dependent and enhanced under acidic condition, probably reflecting the location of the transporter in acidic intracellular compartments. Proton is not a cotransporting ion but most likely change the ionization state of the transporter which dictates transport-permissible/impermissible conformation for nucleoside translocation. May direct the nucleoside transport from lysosomes to cytosol or cytosol to mitochondria to facilitate the fundamental function of salvage synthesis of nucleic acids. Involved in the transport of nucleosides (adenosine, guanosine, uridine, thymidine, cytidine and inosine) and deoxynucleosides (deoxyadenosine, deoxycytidine). Also mediates transport of purine nucleobases (adenine, guanine), and pyrimidine nucleobases (uracil). Also able to transport monoamine neurotransmitters dopamine, serotonin, noradrenaline and tyramine. Capable of transporting ATP. Mediates nucleoside export from lysosomes in macrophages, which regulates macrophage functions and numbers. The sequence is that of Equilibrative nucleoside transporter 3 from Mus musculus (Mouse).